A 189-amino-acid chain; its full sequence is Small ribosomal subunit protein uS5 (189 aa).

Positions 20 to 83 constitute an S5 DRBM domain; it reads FVDRLVHINR…ESAKRALIRV (64 aa).

It belongs to the universal ribosomal protein uS5 family. In terms of assembly, part of the 30S ribosomal subunit. Contacts proteins S4 and S8.

In terms of biological role, with S4 and S12 plays an important role in translational accuracy. Functionally, located at the back of the 30S subunit body where it stabilizes the conformation of the head with respect to the body. This chain is Small ribosomal subunit protein uS5, found in Beijerinckia indica subsp. indica (strain ATCC 9039 / DSM 1715 / NCIMB 8712).